The primary structure comprises 391 residues: Acridone synthase 2 (391 aa).

Cys-164 is a catalytic residue.

This sequence belongs to the thiolase-like superfamily. Chalcone/stilbene synthases family. Homodimer.

The catalysed reaction is N-methylanthraniloyl-CoA + 3 malonyl-CoA + 3 H(+) = 1,3-dihydroxy-N-methylacridone + 3 CO2 + 4 CoA + H2O. The protein is Acridone synthase 2 (ACS2) of Ruta graveolens (Common rue).